Reading from the N-terminus, the 262-residue chain is tRNA pseudouridine synthase A (262 aa).

Aspartate 54 serves as the catalytic Nucleophile. Position 113 (tyrosine 113) interacts with substrate.

It belongs to the tRNA pseudouridine synthase TruA family. As to quaternary structure, homodimer.

It carries out the reaction uridine(38/39/40) in tRNA = pseudouridine(38/39/40) in tRNA. Its function is as follows. Formation of pseudouridine at positions 38, 39 and 40 in the anticodon stem and loop of transfer RNAs. This is tRNA pseudouridine synthase A from Lactobacillus acidophilus (strain ATCC 700396 / NCK56 / N2 / NCFM).